Reading from the N-terminus, the 599-residue chain is Sulfite reductase [NADPH] flavoprotein alpha-component (599 aa).

Positions 64–202 (ITIISASQTG…AASEWRARVV (139 aa)) constitute a Flavodoxin-like domain. Residues 70 to 75 (SQTGNA), 117 to 120 (STQG), and 153 to 162 (LGDSSYEFFC) contribute to the FMN site. Residues 234-448 (DAPLVASLSV…IEHNDNFRLP (215 aa)) enclose the FAD-binding FR-type domain. FAD-binding positions include T322, A356, 386-389 (RLYS), 404-406 (TVG), Y410, and 419-422 (GGAS). Residues 519–520 (SR), 525–529 (KVYVQ), and D561 contribute to the NADP(+) site. Y599 serves as a coordination point for FAD.

Belongs to the NADPH-dependent sulphite reductase flavoprotein subunit CysJ family. This sequence in the N-terminal section; belongs to the flavodoxin family. It in the C-terminal section; belongs to the flavoprotein pyridine nucleotide cytochrome reductase family. In terms of assembly, alpha(8)-beta(8). The alpha component is a flavoprotein, the beta component is a hemoprotein. Requires FAD as cofactor. FMN is required as a cofactor.

The catalysed reaction is hydrogen sulfide + 3 NADP(+) + 3 H2O = sulfite + 3 NADPH + 4 H(+). It participates in sulfur metabolism; hydrogen sulfide biosynthesis; hydrogen sulfide from sulfite (NADPH route): step 1/1. Functionally, component of the sulfite reductase complex that catalyzes the 6-electron reduction of sulfite to sulfide. This is one of several activities required for the biosynthesis of L-cysteine from sulfate. The flavoprotein component catalyzes the electron flow from NADPH -&gt; FAD -&gt; FMN to the hemoprotein component. This Shigella boydii serotype 4 (strain Sb227) protein is Sulfite reductase [NADPH] flavoprotein alpha-component.